Here is a 373-residue protein sequence, read N- to C-terminus: Capsular polysaccharide phosphotransferase (373 aa).

The protein belongs to the stealth family.

Functionally, part of a capsule gene locus. Expression was not detected under standard growth conditions. This Neisseria meningitidis serogroup B protein is Capsular polysaccharide phosphotransferase.